The following is a 445-amino-acid chain: Exodeoxyribonuclease 7 large subunit (445 aa).

It belongs to the XseA family. Heterooligomer composed of large and small subunits.

It localises to the cytoplasm. It carries out the reaction Exonucleolytic cleavage in either 5'- to 3'- or 3'- to 5'-direction to yield nucleoside 5'-phosphates.. In terms of biological role, bidirectionally degrades single-stranded DNA into large acid-insoluble oligonucleotides, which are then degraded further into small acid-soluble oligonucleotides. This chain is Exodeoxyribonuclease 7 large subunit, found in Staphylococcus aureus (strain USA300 / TCH1516).